A 424-amino-acid chain; its full sequence is Adenylosuccinate synthetase (424 aa).

Residues 12 to 18 (GDEGKGK) and 40 to 42 (GHT) contribute to the GTP site. D13 serves as the catalytic Proton acceptor. Mg(2+)-binding residues include D13 and G40. Residues 13–16 (DEGK), 38–41 (NAGH), T130, R144, N220, T235, and R299 each bind IMP. H41 functions as the Proton donor in the catalytic mechanism. 295–301 (VTTGRRR) lines the substrate pocket. Residues R301, 327-329 (KLD), and 412-414 (GTG) contribute to the GTP site.

It belongs to the adenylosuccinate synthetase family. Homodimer. Mg(2+) is required as a cofactor.

It localises to the cytoplasm. It carries out the reaction IMP + L-aspartate + GTP = N(6)-(1,2-dicarboxyethyl)-AMP + GDP + phosphate + 2 H(+). The protein operates within purine metabolism; AMP biosynthesis via de novo pathway; AMP from IMP: step 1/2. Functionally, plays an important role in the de novo pathway and in the salvage pathway of purine nucleotide biosynthesis. Catalyzes the first committed step in the biosynthesis of AMP from IMP. This is Adenylosuccinate synthetase from Aspergillus clavatus (strain ATCC 1007 / CBS 513.65 / DSM 816 / NCTC 3887 / NRRL 1 / QM 1276 / 107).